The primary structure comprises 955 residues: Leucine--tRNA ligase (955 aa).

The 'HIGH' region motif lies at 51-61 (PYLNGVLHAGH). The 'KMSKS' region motif lies at 647–651 (KLSKS). Position 650 (K650) interacts with ATP.

It belongs to the class-I aminoacyl-tRNA synthetase family.

It localises to the cytoplasm. The enzyme catalyses tRNA(Leu) + L-leucine + ATP = L-leucyl-tRNA(Leu) + AMP + diphosphate. The sequence is that of Leucine--tRNA ligase from Methanococcus maripaludis (strain DSM 14266 / JCM 13030 / NBRC 101832 / S2 / LL).